Reading from the N-terminus, the 354-residue chain is Ferrochelatase (354 aa).

Fe cation-binding residues include His-214 and Glu-295.

The protein belongs to the ferrochelatase family.

It is found in the cytoplasm. The catalysed reaction is heme b + 2 H(+) = protoporphyrin IX + Fe(2+). It participates in porphyrin-containing compound metabolism; protoheme biosynthesis; protoheme from protoporphyrin-IX: step 1/1. Functionally, catalyzes the ferrous insertion into protoporphyrin IX. This is Ferrochelatase from Burkholderia cenocepacia (strain HI2424).